Reading from the N-terminus, the 34-residue chain is Conotoxin S4.3 (34 aa).

Q1 is subject to Pyrrolidone carboxylic acid. 4-carboxyglutamate is present on E3. S7 carries an O-linked (HexNAc...) serine glycan. Residue T9 is glycosylated (O-linked (HexNAc...) threonine). P17, P22, P31, and P32 each carry 4-hydroxyproline.

The protein belongs to the conotoxin A superfamily. In terms of processing, contains 3 disulfide bonds. As to expression, expressed by the venom duct.

It is found in the secreted. In terms of biological role, probable neurotoxin with ion channel inhibitor activity. The sequence is that of Conotoxin S4.3 from Conus striatus (Striated cone).